We begin with the raw amino-acid sequence, 145 residues long: Basic phospholipase A2 PC17 (145 aa).

The N-terminal stretch at 1–21 (MYPAHLLLLLAVCVSLLGASA) is a signal peptide. A propeptide spanning residues 22 to 27 (IPPLPL) is cleaved from the precursor. 7 cysteine pairs are disulfide-bonded: Cys-38–Cys-98, Cys-54–Cys-144, Cys-56–Cys-72, Cys-71–Cys-125, Cys-78–Cys-118, Cys-87–Cys-111, and Cys-105–Cys-116. Tyr-55, Gly-57, and Gly-59 together coordinate Ca(2+). Residue His-75 is part of the active site. Asp-76 contributes to the Ca(2+) binding site. The active site involves Asp-119.

Belongs to the phospholipase A2 family. Group I subfamily. D49 sub-subfamily. Ca(2+) is required as a cofactor.

The protein resides in the secreted. The enzyme catalyses a 1,2-diacyl-sn-glycero-3-phosphocholine + H2O = a 1-acyl-sn-glycero-3-phosphocholine + a fatty acid + H(+). Functionally, PLA2 catalyzes the calcium-dependent hydrolysis of the 2-acyl groups in 3-sn-phosphoglycerides. The polypeptide is Basic phospholipase A2 PC17 (Laticauda laticaudata (Blue-ringed sea krait)).